The chain runs to 117 residues: Large ribosomal subunit protein bL20 (117 aa).

Belongs to the bacterial ribosomal protein bL20 family.

In terms of biological role, binds directly to 23S ribosomal RNA and is necessary for the in vitro assembly process of the 50S ribosomal subunit. It is not involved in the protein synthesizing functions of that subunit. This chain is Large ribosomal subunit protein bL20, found in Gloeothece citriformis (strain PCC 7424) (Cyanothece sp. (strain PCC 7424)).